Consider the following 445-residue polypeptide: Damage suppressor protein (445 aa).

2 stretches are compositionally biased toward polar residues: residues 1 to 15 (MAST…SSTG) and 25 to 47 (SQGS…SATS). Disordered stretches follow at residues 1–145 (MAST…HSVI) and 203–445 (YHSV…RKRK). Residues 61–73 (SSTTAGSSSTQGQ) are compositionally biased toward low complexity. The segment covering 74–87 (KFSTTPTDPKTFSS) has biased composition (polar residues). Positions 88–97 (DQKEKSKSPA) are enriched in basic and acidic residues. Over residues 117 to 138 (DAKSSGQSQGQSKDSGKSSSDS) the composition is skewed to low complexity. Positions 207–228 (VGDKTDDKKEGEHSGDKKDDSK) are enriched in basic and acidic residues. A required and sufficient for DNA-binding and co-localization with nuclear DNA region spans residues 208-445 (GDKTDDKKEG…GGKAGGRKRK (238 aa)). A compositionally biased stretch (polar residues) spans 245–256 (ETSGQAESSSGN). Over residues 257-306 (EGAAPAKGRGRGRPPAAAKGVAKGAAKGAAASKGAKSGAESSKGGEQSSG) the composition is skewed to low complexity. Positions 329–338 (GEGGASGSEG) are enriched in gly residues. Positions 360-445 (EPPRRSSRLT…GGKAGGRKRK (86 aa)) are required for nucleosome binding and for the protection of chromatin from hydroxyl radical-mediated DNA damage. Over residues 367–431 (RLTSSGTGAG…ASKAPQNGAG (65 aa)) the composition is skewed to low complexity. The span at 432-445 (AKKKGGKAGGRKRK) shows a compositional bias: basic residues.

The protein localises to the nucleus. Its function is as follows. Unique chromatin-associating protein that contributes to the organism's exceptional tolerance to harsh environmental stresses. Binds with a higher affinity to nucleosomes than to free DNA. Protects chromatin from damage caused by hydroxyl radical-mediated cleavage induced by X-rays or treatment with hydrogen peroxide. Suppresses X-ray-induced DNA damage that includes single-strand breaks (SSBs) as well as more hazardous double-strand breaks (DSBs), and improves radiotolerance. Also shields DNA against reactive oxygen species (ROS). This chain is Damage suppressor protein, found in Ramazzottius varieornatus (Water bear).